Consider the following 827-residue polypeptide: Villin-1 (827 aa).

The necessary for homodimerization stretch occupies residues 1-126; that stretch reads MTKLNAQVKG…IRKGGVASGM (126 aa). Positions 1 to 734 are core; the sequence is MTKLNAQVKG…YEDLKAELGN (734 aa). Residues 28 to 107 form a Gelsolin-like 1 repeat; sequence QMVPVSSSTY…EVQGNESEAF (80 aa). LPA/PIP2-binding site stretches follow at residues 112–119 and 138–146; these read KQGIVIRK and RLLHVKGKR. Gelsolin-like repeat units lie at residues 148–216 and 269–342; these read VVAG…GEDE and EVAT…SAVF. Serine 366 carries the phosphoserine modification. Gelsolin-like repeat units follow at residues 409–489, 528–595, and 634–707; these read DLVP…PHLM, TKAF…ANFW, and TEIP…PPTF. The residue at position 735 (serine 735) is a Phosphoserine. Residues 761 to 827 form the HP domain; sequence SGPLPIFPLE…QNLKKEKGLF (67 aa). An LPA/PIP2-binding site 3 region spans residues 816–824; it reads KQQNLKKEK.

The protein belongs to the villin/gelsolin family. As to quaternary structure, monomer. Homodimer; homodimerization is necessary for actin-bundling. Associates with F-actin; phosphorylation at tyrosine residues decreases the association with F-actin. Interacts (phosphorylated at C-terminus tyrosine phosphorylation sites) with PLCG1 (via the SH2 domains). Interacts (phosphorylated form) with PLCG1; the interaction is enhanced by hepatocyte growth factor (HGF). Post-translationally, phosphorylated on tyrosine residues by SRC. The unphosphorylated form increases the initial rate of actin-nucleating activity, whereas the tyrosine-phosphorylated form inhibits actin-nucleating activity, enhances actin-bundling activity and enhances actin-severing activity by reducing high Ca(2+) requirements. The tyrosine-phosphorylated form does not regulate actin-capping activity. Tyrosine phosphorylation is essential for cell migration: tyrosine phosphorylation sites in the N-terminus half regulate actin reorganization and cell morphology, whereas tyrosine phosphorylation sites in the C-terminus half regulate cell migration. Tyrosine phosphorylation is induced by epidermal growth factor (EGF) and stimulates cell migration.

Its subcellular location is the cytoplasm. The protein resides in the cytoskeleton. It is found in the cell projection. It localises to the lamellipodium. The protein localises to the ruffle. Its subcellular location is the microvillus. The protein resides in the filopodium tip. It is found in the filopodium. In terms of biological role, epithelial cell-specific Ca(2+)-regulated actin-modifying protein that modulates the reorganization of microvillar actin filaments. Plays a role in the actin nucleation, actin filament bundle assembly, actin filament capping and severing. Binds phosphatidylinositol 4,5-bisphosphate (PIP2) and lysophosphatidic acid (LPA); binds LPA with higher affinity than PIP2. Binding to LPA increases its phosphorylation by SRC and inhibits all actin-modifying activities. Binding to PIP2 inhibits actin-capping and -severing activities but enhances actin-bundling activity. Regulates the intestinal epithelial cell morphology, cell invasion, cell migration and apoptosis. Protects against apoptosis induced by dextran sodium sulfate (DSS) in the gastrointestinal epithelium. Appears to regulate cell death by maintaining mitochondrial integrity. Enhances hepatocyte growth factor (HGF)-induced epithelial cell motility, chemotaxis and wound repair. This Sus scrofa (Pig) protein is Villin-1 (VIL1).